The chain runs to 160 residues: MNPRRKNRLILVMLVLVGLGLATALVMYALRSNIDLFYTPSEMVNGKGEQQLKPEPGQRLRVGGMVMPGSVKRDPNTLRVAFKLYDASGVISVSYDGILPDLFREGQGVVAQGVLQDATHVIAKEVLAKHDEKYTPPEIEDAMKKDHPAQAVGDNSVRPS.

At 1–8 (MNPRRKNR) the chain is on the cytoplasmic side. A helical; Signal-anchor for type II membrane protein membrane pass occupies residues 9–29 (LILVMLVLVGLGLATALVMYA). Over 30-160 (LRSNIDLFYT…AVGDNSVRPS (131 aa)) the chain is Periplasmic. Positions 130 and 134 each coordinate heme. Residues 133 to 148 (KYTPPEIEDAMKKDHP) are compositionally biased toward basic and acidic residues. The interval 133–160 (KYTPPEIEDAMKKDHPAQAVGDNSVRPS) is disordered.

This sequence belongs to the CcmE/CycJ family.

The protein localises to the cell inner membrane. In terms of biological role, heme chaperone required for the biogenesis of c-type cytochromes. Transiently binds heme delivered by CcmC and transfers the heme to apo-cytochromes in a process facilitated by CcmF and CcmH. The sequence is that of Cytochrome c-type biogenesis protein CcmE from Erwinia tasmaniensis (strain DSM 17950 / CFBP 7177 / CIP 109463 / NCPPB 4357 / Et1/99).